A 337-amino-acid polypeptide reads, in one-letter code: Heme A synthase (337 aa).

Helical transmembrane passes span 3–23, 94–114, 120–140, 154–174, 191–211, 248–268, and 289–309; these read LARW…IGGI, VIGL…MIPA, LLAL…MVAS, LSAH…TALD, GVAW…AWVA, FLLH…LVVL, and TMVV…IAVA. Histidine 254 is a heme binding site. Histidine 310 provides a ligand contact to heme. A helical transmembrane segment spans residues 311-331; the sequence is QLTGALLVISTAWAAHAIGTA.

This sequence belongs to the COX15/CtaA family. Type 2 subfamily. In terms of assembly, interacts with CtaB. Heme b serves as cofactor.

Its subcellular location is the cell membrane. It catalyses the reaction Fe(II)-heme o + 2 A + H2O = Fe(II)-heme a + 2 AH2. Its pathway is porphyrin-containing compound metabolism; heme A biosynthesis; heme A from heme O: step 1/1. Functionally, catalyzes the conversion of heme O to heme A by two successive hydroxylations of the methyl group at C8. The first hydroxylation forms heme I, the second hydroxylation results in an unstable dihydroxymethyl group, which spontaneously dehydrates, resulting in the formyl group of heme A. The protein is Heme A synthase of Erythrobacter litoralis (strain HTCC2594).